A 105-amino-acid polypeptide reads, in one-letter code: Small ribosomal subunit protein bS20 (105 aa).

This sequence belongs to the bacterial ribosomal protein bS20 family.

Its function is as follows. Binds directly to 16S ribosomal RNA. This is Small ribosomal subunit protein bS20 from Caldanaerobacter subterraneus subsp. tengcongensis (strain DSM 15242 / JCM 11007 / NBRC 100824 / MB4) (Thermoanaerobacter tengcongensis).